The chain runs to 591 residues: Metastasis-associated protein MTA3 (591 aa).

Residues 1-147 form the BAH domain; that stretch reads MAANMYRVGD…PSVKTLLADK (147 aa). The 111-residue stretch at 148 to 258 folds into the ELM2 domain; it reads GEIRVGPKYQ…SAISVLVPLG (111 aa). One can recognise an SANT domain in the interval 265–317; that stretch reads DEMEEWSASEACLFEEALEKYGKDFNDIRQDFLPWKSLTSIIEYYYMWKTTDR. The GATA-type; atypical zinc-finger motif lies at 377–404; the sequence is CESCYATQSHQWYSWGPPNMQCRLCATC. The segment at 417 to 456 is disordered; the sequence is PTQSDEEKSPSPTAEDPRARSHMSRQALQGMPVRNTGSPK. Over residues 421–435 the composition is skewed to basic and acidic residues; the sequence is DEEKSPSPTAEDPRA. Phosphoserine is present on residues Ser425 and Ser427. A Phosphothreonine modification is found at Thr452. Position 516 is a phosphoserine (Ser516).

It belongs to the metastasis-associated protein family. As to quaternary structure, component of the nucleosome remodeling and deacetylase (NuRD) repressor complex, composed of core proteins MTA1, MTA2, MTA3, RBBP4, RBBP7, HDAC1, HDAC2, MBD2, MBD3, and peripherally associated proteins CDK2AP1, CDK2AP2, GATAD2A, GATAD2B, CHD3, CHD4 and CHD5. The exact stoichiometry of the NuRD complex is unknown, and some subunits such as MBD2 and MBD3, GATAD2A and GATAD2B, and CHD3, CHD4 and CHD5 define mutually exclusive NuRD complexes. Interacts with BCL6. Interacts with NACC2. Interacts with PWWP2B. Expressed in heart, brain, spleen, lung, liver and kidney.

It localises to the nucleus. It is found in the cytoplasm. Acts as a component of the histone deacetylase NuRD complex which participates in the remodeling of chromatin. Plays a role in maintenance of the normal epithelial architecture through the repression of SNAI1 transcription in a histone deacetylase-dependent manner, and thus the regulation of E-cadherin levels. Contributes to transcriptional repression by BCL6. In Mus musculus (Mouse), this protein is Metastasis-associated protein MTA3 (Mta3).